A 642-amino-acid chain; its full sequence is Threonine--tRNA ligase (642 aa).

The 61-residue stretch at 1-61 (MPVITLPDGS…ENDAQLAIIT (61 aa)) folds into the TGS domain. Residues 243–534 (DHRKIGKQLD…LTEEFAGFFP (292 aa)) form a catalytic region. K286 is modified (N6-acetyllysine). The Zn(2+) site is built by C334, H385, and H511.

The protein belongs to the class-II aminoacyl-tRNA synthetase family. In terms of assembly, homodimer. Zn(2+) is required as a cofactor.

Its subcellular location is the cytoplasm. It carries out the reaction tRNA(Thr) + L-threonine + ATP = L-threonyl-tRNA(Thr) + AMP + diphosphate + H(+). In terms of biological role, catalyzes the attachment of threonine to tRNA(Thr) in a two-step reaction: L-threonine is first activated by ATP to form Thr-AMP and then transferred to the acceptor end of tRNA(Thr). Also edits incorrectly charged L-seryl-tRNA(Thr). The sequence is that of Threonine--tRNA ligase from Escherichia fergusonii (strain ATCC 35469 / DSM 13698 / CCUG 18766 / IAM 14443 / JCM 21226 / LMG 7866 / NBRC 102419 / NCTC 12128 / CDC 0568-73).